The chain runs to 452 residues: Coproporphyrinogen III oxidase (452 aa).

FAD is bound by residues 10 to 15, 36 to 37, 58 to 61, Val242, Trp390, and 426 to 428; these read GGGISG, EP, GAEA, and IGV.

Belongs to the protoporphyrinogen/coproporphyrinogen oxidase family. Coproporphyrinogen III oxidase subfamily. It depends on FAD as a cofactor.

The protein localises to the cytoplasm. The enzyme catalyses coproporphyrinogen III + 3 O2 = coproporphyrin III + 3 H2O2. It participates in porphyrin-containing compound metabolism; protoheme biosynthesis. Functionally, involved in coproporphyrin-dependent heme b biosynthesis. Catalyzes the oxidation of coproporphyrinogen III to coproporphyrin III. This Mycobacterium bovis (strain ATCC BAA-935 / AF2122/97) protein is Coproporphyrinogen III oxidase.